Consider the following 778-residue polypeptide: Probable protein kinase DDB_G0291133 (778 aa).

Residues 129–162 form a disordered region; the sequence is LSINNNNNNNNNNGGYKIPSSVNKNSNNYNSNSN. One can recognise a Protein kinase domain in the interval 177–462; it reads FDVVCKLGSG…LDQILLNENI (286 aa). ATP-binding positions include 183–191 and Lys206; that span reads LGSGSFSDV. Catalysis depends on Asp303, which acts as the Proton acceptor. Mg(2+) is bound by residues Asn308 and Asp321. 3 disordered regions span residues 478-509, 562-697, and 757-778; these read NIEN…DDNN, HFVR…GFYG, and SHPQ…QETN. The segment covering 578-590 has biased composition (acidic residues); the sequence is SDEEEDDDDDDDS. Residues 599–651 show a composition bias toward low complexity; the sequence is SLNNLNNSSSNIGISESNSNNSFSSILEENNESSSSSPLPSLSFSRRLSTSSL. The segment covering 652-670 has biased composition (polar residues); that stretch reads VTTISPKPNFNTSGNKLFS. Over residues 671–693 the composition is skewed to low complexity; the sequence is NENNNSNNNNNNNNNNQNNNNNN. Over residues 757–766 the composition is skewed to basic and acidic residues; sequence SHPQESDKMS.

Belongs to the protein kinase superfamily. Ser/Thr protein kinase family. WEE1 subfamily.

The catalysed reaction is L-seryl-[protein] + ATP = O-phospho-L-seryl-[protein] + ADP + H(+). The enzyme catalyses L-threonyl-[protein] + ATP = O-phospho-L-threonyl-[protein] + ADP + H(+). In Dictyostelium discoideum (Social amoeba), this protein is Probable protein kinase DDB_G0291133.